A 256-amino-acid polypeptide reads, in one-letter code: MAVGKNKRLSKGKKGVKKRTVDPFSRKDEYSVKAPSTFQIRDVGKTLVNRTSGLKNANDSLKGRIFEVSLADLQNDEDHAFRKVKLRVDEVQGKNCLTNFHGLDFTTDKLRSLVRKWQSLIEANVTVKTTDDYLLRLFAIAFTKRRPNQIKKTTYARSSQIRAIRKKMIEIMQREAASCSLAQLTHKLIPEVIGREIEKATQGIYPLQNVHIRKVKLLKAPKFDLGALLNLHGESTTDDKGHKVEREFKEQVLESV.

Positions 1 to 18 are enriched in basic residues; it reads MAVGKNKRLSKGKKGVKK. A disordered region spans residues 1 to 21; that stretch reads MAVGKNKRLSKGKKGVKKRTV. An N-acetylalanine; partial modification is found at Ala2.

This sequence belongs to the eukaryotic ribosomal protein eS1 family. Component of the small ribosomal subunit. Mature ribosomes consist of a small (40S) and a large (60S) subunit. The 40S subunit contains about 33 different proteins and 1 molecule of RNA (18S). The 60S subunit contains about 49 different proteins and 3 molecules of RNA (25S, 5.8S and 5S).

It is found in the cytoplasm. The sequence is that of Small ribosomal subunit protein eS1 (rps1) from Neosartorya fischeri (strain ATCC 1020 / DSM 3700 / CBS 544.65 / FGSC A1164 / JCM 1740 / NRRL 181 / WB 181) (Aspergillus fischerianus).